Consider the following 1409-residue polypeptide: DNA-directed RNA polymerase subunit beta' (1409 aa).

The Zn(2+) site is built by Cys-70, Cys-72, Cys-85, and Cys-88. Mg(2+) contacts are provided by Asp-458, Asp-460, and Asp-462. Cys-813, Cys-887, Cys-894, and Cys-897 together coordinate Zn(2+). Residues 1385–1403 are compositionally biased toward low complexity; the sequence is EAAELAGSTSDVSTTADAS. Residues 1385-1409 are disordered; that stretch reads EAAELAGSTSDVSTTADASEGAASE.

Belongs to the RNA polymerase beta' chain family. The RNAP catalytic core consists of 2 alpha, 1 beta, 1 beta' and 1 omega subunit. When a sigma factor is associated with the core the holoenzyme is formed, which can initiate transcription. It depends on Mg(2+) as a cofactor. The cofactor is Zn(2+).

It carries out the reaction RNA(n) + a ribonucleoside 5'-triphosphate = RNA(n+1) + diphosphate. Its function is as follows. DNA-dependent RNA polymerase catalyzes the transcription of DNA into RNA using the four ribonucleoside triphosphates as substrates. The protein is DNA-directed RNA polymerase subunit beta' of Variovorax paradoxus (strain S110).